Consider the following 415-residue polypeptide: MNVLEIGAGGREHALAYKLNQSNLVKQVFAIPGNEAMTPIAEVHTEISESDHQAILDFAKRQNVDWVVIGPEQPLIDGLADILRANGFKVFGPNKQAAQIEGSKLFAKKIMEKYNIPTADYKEVERKKDALTYIENCELPVVVKKDGLAAGKGVIIADTIEAARSAIEIMYGDEEEGTVVFETFLEGEEFSLMTFVNGDLAVPFDCIAQDHKRAFDHDEGPNTGGMGAYCPVPHISDDVLKLTNETIAQPIAKAMLNEGYQFFGVLYIGAILTKNGPKVIEFNARFGDPEAQVLLSRMESDLMQHIIDLDEGKRTEFKWKNESIVGVMLASKGYPDAYEKGHKVSGFDLNENYFVSGLKKQGDTFVTSGGRVILAIGKGDNVQDAQRDAYEKVSQIQSDHLFYRHDIANKALQLK.

One can recognise an ATP-grasp domain in the interval 108-311 (KKIMEKYNIP…LMQHIIDLDE (204 aa)). An ATP-binding site is contributed by 134 to 191 (IENCELPVVVKKDGLAAGKGVIIADTIEAARSAIEIMYGDEEEGTVVFETFLEGEEFS). Residues Glu281 and Asn283 each coordinate Mg(2+).

This sequence belongs to the GARS family. The cofactor is Mg(2+). It depends on Mn(2+) as a cofactor.

It catalyses the reaction 5-phospho-beta-D-ribosylamine + glycine + ATP = N(1)-(5-phospho-beta-D-ribosyl)glycinamide + ADP + phosphate + H(+). It functions in the pathway purine metabolism; IMP biosynthesis via de novo pathway; N(1)-(5-phospho-D-ribosyl)glycinamide from 5-phospho-alpha-D-ribose 1-diphosphate: step 2/2. This chain is Phosphoribosylamine--glycine ligase, found in Staphylococcus aureus (strain MW2).